The primary structure comprises 475 residues: Homeobox even-skipped homolog protein 2 (475 aa).

Disordered stretches follow at residues Pro82 to Asp113 and Thr155 to Asp189. Residues Ser83–Thr96 are compositionally biased toward low complexity. The segment covering Ser160–Ser186 has biased composition (gly residues). Residues Val191–Arg250 constitute a DNA-binding region (homeobox).

This sequence belongs to the even-skipped homeobox family.

It localises to the nucleus. The polypeptide is Homeobox even-skipped homolog protein 2 (Evx2) (Mus musculus (Mouse)).